The sequence spans 287 residues: Glutamate racemase (287 aa).

The span at 1-15 shows a compositional bias: polar residues; the sequence is MATKPQDANTTSREA. The disordered stretch occupies residues 1-25; it reads MATKPQDANTTSREAITSKADSPPR. Substrate-binding positions include 32–33 and 64–65; these read DS and YG. The active-site Proton donor/acceptor is the Cys96. 97–98 contributes to the substrate binding site; it reads NT. Cys208 acts as the Proton donor/acceptor in catalysis. 209–210 contributes to the substrate binding site; that stretch reads TH.

The protein belongs to the aspartate/glutamate racemases family.

It catalyses the reaction L-glutamate = D-glutamate. It functions in the pathway cell wall biogenesis; peptidoglycan biosynthesis. Its function is as follows. Provides the (R)-glutamate required for cell wall biosynthesis. This chain is Glutamate racemase, found in Yersinia pseudotuberculosis serotype O:1b (strain IP 31758).